The primary structure comprises 503 residues: Maturase K (503 aa).

Belongs to the intron maturase 2 family. MatK subfamily.

It localises to the plastid. The protein localises to the chloroplast. Functionally, usually encoded in the trnK tRNA gene intron. Probably assists in splicing its own and other chloroplast group II introns. In Eucalyptus globulus subsp. globulus (Tasmanian blue gum), this protein is Maturase K.